A 393-amino-acid polypeptide reads, in one-letter code: Alpha-pyrone synthesis polyketide synthase-like Pks18 (393 aa).

Residues 1–26 (MNVSAESGAPRRAGQRHEVGLAQLPP) are disordered. C175 acts as the Nucleophile in catalysis. H221 is a binding site for substrate.

The protein belongs to the thiolase-like superfamily. Chalcone/stilbene synthases family. In terms of assembly, homodimer.

It functions in the pathway lipid metabolism; fatty acid biosynthesis. In terms of biological role, involved in the biosynthesis of tri- and tetraketide alpha-pyrones. Pks18 catalyzes the extension of medium- and long-chain aliphatic acyl-CoA substrates by using malonyl-CoA as an extender molecule to synthesize polyketide products. This chain is Alpha-pyrone synthesis polyketide synthase-like Pks18 (pks18), found in Mycobacterium bovis (strain ATCC BAA-935 / AF2122/97).